The chain runs to 129 residues: Small ribosomal subunit protein uS9 (129 aa).

It belongs to the universal ribosomal protein uS9 family.

In Chlorobium limicola (strain DSM 245 / NBRC 103803 / 6330), this protein is Small ribosomal subunit protein uS9.